A 558-amino-acid chain; its full sequence is Phosphatase and actin regulator 3 (558 aa).

The segment covering methionine 1–leucine 11 has biased composition (polar residues). Disordered regions lie at residues methionine 1 to threonine 69, lysine 81 to proline 288, and leucine 300 to methionine 366. Residues glutamine 18 to aspartate 33 show a composition bias toward low complexity. A Phosphothreonine modification is found at threonine 69. An RPEL 1 repeat occupies serine 92–glutamate 117. The span at leucine 94 to isoleucine 108 shows a compositional bias: basic and acidic residues. Residues glutamate 144–leucine 169 show a composition bias toward polar residues. Residues proline 228–lysine 239 show a composition bias toward pro residues. Serine 229 is modified (phosphoserine). Residue threonine 235 is modified to Phosphothreonine. Basic and acidic residues-rich tracts occupy residues leucine 300 to alanine 341 and alanine 354 to glutamate 363. 3 RPEL repeats span residues glutamate 400 to threonine 425, methionine 438 to asparagine 463, and glutamine 476 to serine 501. The stretch at alanine 449–arginine 485 forms a coiled coil.

It belongs to the phosphatase and actin regulator family. As to quaternary structure, binds PPP1CA and actin; thus inhibiting the protein phosphatase 1 (PP1) activity.

The protein localises to the nucleus matrix. In Mus musculus (Mouse), this protein is Phosphatase and actin regulator 3 (Phactr3).